The sequence spans 411 residues: Adenylosuccinate synthetase (411 aa).

Residues Gly-11–Lys-17 and Gly-39–Thr-41 contribute to the GTP site. The active-site Proton acceptor is the Asp-12. Mg(2+)-binding residues include Asp-12 and Gly-39. IMP-binding positions include Asp-12–Lys-15, Asn-37–His-40, Thr-121, Arg-135, Gln-215, Thr-230, and Arg-294. His-40 serves as the catalytic Proton donor. Substrate is bound at residue Thr-290–Arg-296. GTP is bound by residues Arg-296, Lys-322–Asp-324, and Ser-400–Ser-402.

It belongs to the adenylosuccinate synthetase family. As to quaternary structure, homodimer. It depends on Mg(2+) as a cofactor.

It localises to the cytoplasm. It catalyses the reaction IMP + L-aspartate + GTP = N(6)-(1,2-dicarboxyethyl)-AMP + GDP + phosphate + 2 H(+). The protein operates within purine metabolism; AMP biosynthesis via de novo pathway; AMP from IMP: step 1/2. Its function is as follows. Plays an important role in the de novo pathway of purine nucleotide biosynthesis. Catalyzes the first committed step in the biosynthesis of AMP from IMP. The sequence is that of Adenylosuccinate synthetase from Helicobacter pylori (strain P12).